The primary structure comprises 459 residues: tRNA modification GTPase MnmE (459 aa).

Positions 22, 85, and 124 each coordinate (6S)-5-formyl-5,6,7,8-tetrahydrofolate. The TrmE-type G domain maps to 221 to 380; it reads GLSTVIVGKP…LEIQIRDLFF (160 aa). Asn231 lines the K(+) pocket. GTP-binding positions include 231–236, 250–256, and 275–278; these read NVGKSS, TEVAGTT, and DTAG. Ser235 contributes to the Mg(2+) binding site. K(+)-binding residues include Thr250, Val252, and Thr255. A Mg(2+)-binding site is contributed by Thr256. (6S)-5-formyl-5,6,7,8-tetrahydrofolate is bound at residue Lys459.

Belongs to the TRAFAC class TrmE-Era-EngA-EngB-Septin-like GTPase superfamily. TrmE GTPase family. Homodimer. Heterotetramer of two MnmE and two MnmG subunits. Requires K(+) as cofactor.

It is found in the cytoplasm. Its function is as follows. Exhibits a very high intrinsic GTPase hydrolysis rate. Involved in the addition of a carboxymethylaminomethyl (cmnm) group at the wobble position (U34) of certain tRNAs, forming tRNA-cmnm(5)s(2)U34. The chain is tRNA modification GTPase MnmE from Staphylococcus aureus (strain Mu3 / ATCC 700698).